Here is a 1177-residue protein sequence, read N- to C-terminus: DNA-directed RNA polymerase subunit beta (1177 aa).

Residues 1147–1161 (DDTEIEMRDTEDDDD) show a composition bias toward acidic residues. Residues 1147-1177 (DDTEIEMRDTEDDDDHQSADKLNVEVETTKE) are disordered. Basic and acidic residues predominate over residues 1162–1177 (HQSADKLNVEVETTKE).

It belongs to the RNA polymerase beta chain family. As to quaternary structure, the RNAP catalytic core consists of 2 alpha, 1 beta, 1 beta' and 1 omega subunit. When a sigma factor is associated with the core the holoenzyme is formed, which can initiate transcription.

It carries out the reaction RNA(n) + a ribonucleoside 5'-triphosphate = RNA(n+1) + diphosphate. In terms of biological role, DNA-dependent RNA polymerase catalyzes the transcription of DNA into RNA using the four ribonucleoside triphosphates as substrates. The chain is DNA-directed RNA polymerase subunit beta from Bacillus cereus (strain G9842).